Reading from the N-terminus, the 117-residue chain is Large ribosomal subunit protein uL18 (117 aa).

The protein belongs to the universal ribosomal protein uL18 family. As to quaternary structure, part of the 50S ribosomal subunit; part of the 5S rRNA/L5/L18/L25 subcomplex. Contacts the 5S and 23S rRNAs.

Its function is as follows. This is one of the proteins that bind and probably mediate the attachment of the 5S RNA into the large ribosomal subunit, where it forms part of the central protuberance. In Mannheimia succiniciproducens (strain KCTC 0769BP / MBEL55E), this protein is Large ribosomal subunit protein uL18.